Reading from the N-terminus, the 86-residue chain is Teretoxin Tsu6.16 (86 aa).

Residues M1–L21 form the signal peptide. The propeptide occupies G22–N46.

It belongs to the teretoxin M (TM) superfamily. In terms of processing, contains 3 disulfide bonds. Expressed by the venom duct.

The protein resides in the secreted. The polypeptide is Teretoxin Tsu6.16 (Terebra subulata (Chocolate spotted auger)).